Consider the following 337-residue polypeptide: Casein kinase I isoform alpha-like (337 aa).

Position 8 is an N6-acetyllysine (K8). Residues 17-285 enclose the Protein kinase domain; that stretch reads YKLVRKIGSG…YLRQLFRILF (269 aa). Residues 23-31 and K46 each bind ATP; that span reads IGSGSFGDV. Catalysis depends on D136, which acts as the Proton acceptor. Low complexity predominate over residues 309–325; the sequence is AASSSGQGQQAQTQTGK. The interval 309–337 is disordered; it reads AASSSGQGQQAQTQTGKQTEKNKNNVKDN. Over residues 326-337 the composition is skewed to basic and acidic residues; sequence QTEKNKNNVKDN.

It belongs to the protein kinase superfamily. CK1 Ser/Thr protein kinase family. Casein kinase I subfamily. As to quaternary structure, interacts with FAM83A, FAM83B, FAM83C, FAM83D, FAM83E, FAM83F, FAM83G and FAM83H (via DUF1669).

It is found in the cytoplasm. It carries out the reaction L-seryl-[protein] + ATP = O-phospho-L-seryl-[protein] + ADP + H(+). The enzyme catalyses L-threonyl-[protein] + ATP = O-phospho-L-threonyl-[protein] + ADP + H(+). Functionally, casein kinases are operationally defined by their preferential utilization of acidic proteins such as caseins as substrates. It can phosphorylate a large number of proteins. Participates in Wnt signaling. This chain is Casein kinase I isoform alpha-like (CSNK1A1L), found in Homo sapiens (Human).